Reading from the N-terminus, the 390-residue chain is MEEPGAQCAPPLAAGSQIAVPQANLSAAHSHNCSAEGYIYQDSIALPWKVLLVLLLALFTLATTLSNAFVVATVYRTRKLHTPANYLIASLAVTDLLVSILVMPISTMYTVTGRWTLGQVVCDLWLSSDITCCTASIMHLCVIALDRYWAITDAVEYSAKRTPKRAAIMIRLVWVFSICISLPPFFWRQAKAEEEVSECLVNTDHVLYTVYSTVGAFYLPTLLLIALYGRIYVEARSRILKQTPNRTGKRLTRAQLITDSPGSTTSVTSINSRAPDVPSESGSPVYVNQVKVRVSDALLEKKKLMAARERKATKTLGIILGVFIVCWLPFFIISLVMPICKDACWFHQAIFDFFTWLGYVNSLINPIIYTMSNEDFKQAFHKLIRFKCTS.

Residues 1–46 (MEEPGAQCAPPLAAGSQIAVPQANLSAAHSHNCSAEGYIYQDSIAL) lie on the Extracellular side of the membrane. Residues Asn-24 and Asn-32 are each glycosylated (N-linked (GlcNAc...) asparagine). A helical membrane pass occupies residues 47–72 (PWKVLLVLLLALFTLATTLSNAFVVA). The Cytoplasmic portion of the chain corresponds to 73–86 (TVYRTRKLHTPANY). Residues 87–111 (LIASLAVTDLLVSILVMPISTMYTV) traverse the membrane as a helical segment. Residues 112–119 (TGRWTLGQ) are Extracellular-facing. Residues 120–145 (VVCDLWLSSDITCCTASIMHLCVIAL) traverse the membrane as a helical segment. A disulfide bond links Cys-122 and Cys-199. The ergotamine site is built by Asp-129 and Thr-134. The DRY motif; important for ligand-induced conformation changes and signaling signature appears at 146–148 (DRY). Residues 146-165 (DRYWAITDAVEYSAKRTPKR) lie on the Cytoplasmic side of the membrane. The chain crosses the membrane as a helical span at residues 166-184 (AAIMIRLVWVFSICISLPP). Over 185–205 (FFWRQAKAEEEVSECLVNTDH) the chain is Extracellular. Ergotamine is bound at residue Val-201. Residues 206–229 (VLYTVYSTVGAFYLPTLLLIALYG) form a helical membrane-spanning segment. Residues 230–315 (RIYVEARSRI…AARERKATKT (86 aa)) are Cytoplasmic-facing. The segment covering 260 to 272 (SPGSTTSVTSINS) has biased composition (polar residues). Residues 260–282 (SPGSTTSVTSINSRAPDVPSESG) are disordered. Residues 316 to 337 (LGIILGVFIVCWLPFFIISLVM) traverse the membrane as a helical segment. The Extracellular portion of the chain corresponds to 338 to 347 (PICKDACWFH). A helical membrane pass occupies residues 348 to 370 (QAIFDFFTWLGYVNSLINPIIYT). The NPxxY motif; important for ligand-induced conformation changes and signaling signature appears at 365–369 (NPIIY). Over 371–390 (MSNEDFKQAFHKLIRFKCTS) the chain is Cytoplasmic. Cys-388 is lipidated: S-palmitoyl cysteine.

This sequence belongs to the G-protein coupled receptor 1 family. As to quaternary structure, homodimer. Heterodimer with HTR1D. Phosphorylated. Desensitization of the receptor may be mediated by its phosphorylation. In terms of processing, palmitoylated.

The protein localises to the cell membrane. Functionally, G-protein coupled receptor for 5-hydroxytryptamine (serotonin). Also functions as a receptor for ergot alkaloid derivatives, various anxiolytic and antidepressant drugs and other psychoactive substances, such as lysergic acid diethylamide (LSD). Ligand binding causes a conformation change that triggers signaling via guanine nucleotide-binding proteins (G proteins) and modulates the activity of downstream effectors, such as adenylate cyclase. HTR1B is coupled to G(i)/G(o) G alpha proteins and mediates inhibitory neurotransmission by inhibiting adenylate cyclase activity. Arrestin family members inhibit signaling via G proteins and mediate activation of alternative signaling pathways. Regulates the release of 5-hydroxytryptamine, dopamine and acetylcholine in the brain, and thereby affects neural activity, nociceptive processing, pain perception, mood and behavior. Besides, plays a role in vasoconstriction of cerebral arteries. The polypeptide is 5-hydroxytryptamine receptor 1B (HTR1B) (Oryctolagus cuniculus (Rabbit)).